Reading from the N-terminus, the 287-residue chain is Glucose uptake protein GlcU (287 aa).

8 consecutive transmembrane segments (helical) span residues 4 to 26 (LLALLPALFWGSIVLFNVKLGGG), 38 to 60 (ALIVSIVIYFFVQPVLSLRIFIV), 110 to 132 (WSTPIAITLGVLALIFIIVGIIL), 153 to 175 (ILILLVSTLGYLVYVVVARLFNV), 180 to 197 (ALLPQAIGMVVGGLVLTY), 210 to 227 (ILPGLIWAGGNMFLFISQ), 232 to 254 (VATSFSLSQMGIVISTLGGIFIL), and 261 to 283 (RQLIAIAIGIILIIAAAVFLGIA).

It belongs to the GRP transporter (TC 2.A.7.5) family.

It is found in the cell membrane. In terms of biological role, involved in the uptake of glucose. The sequence is that of Glucose uptake protein GlcU (glcU) from Bacillus subtilis (strain 168).